The chain runs to 153 residues: Pheromone-binding protein Gp-9 (153 aa).

The N-terminal stretch at 1–19 (MKTLILHICIFALVAFASA) is a signal peptide. 3 disulfides stabilise this stretch: Cys-37–Cys-77, Cys-73–Cys-129, and Cys-118–Cys-138.

It belongs to the PBP/GOBP family. As to quaternary structure, homodimer.

Its subcellular location is the secreted. Colony queen number, a major feature of social organization, is associated with worker genotype for Gp-9. Colonies are headed by either a single reproductive queen (monogyne form) or multiple queens (polygyne form). Differences in worker Gp-9 genotypes between social forms may cause differences in workers' abilities to recognize queens and regulate their numbers. The protein is Pheromone-binding protein Gp-9 of Solenopsis nigella gensterblumi (Fire ant).